A 358-amino-acid chain; its full sequence is NADH-quinone oxidoreductase subunit H (358 aa).

8 helical membrane-spanning segments follow: residues 20–40 (ITVG…IPLI), 95–115 (ALFY…WAVI), 128–148 (IGLL…IIAG), 168–188 (ISYE…SGSM), 206–226 (VFSW…ISAV), 253–273 (GFAF…IAAL), 295–315 (TPSA…YLWI), and 334–354 (VLIP…ISPL).

Belongs to the complex I subunit 1 family. As to quaternary structure, NDH-1 is composed of 14 different subunits. Subunits NuoA, H, J, K, L, M, N constitute the membrane sector of the complex.

The protein localises to the cell inner membrane. It catalyses the reaction a quinone + NADH + 5 H(+)(in) = a quinol + NAD(+) + 4 H(+)(out). NDH-1 shuttles electrons from NADH, via FMN and iron-sulfur (Fe-S) centers, to quinones in the respiratory chain. The immediate electron acceptor for the enzyme in this species is believed to be ubiquinone. Couples the redox reaction to proton translocation (for every two electrons transferred, four hydrogen ions are translocated across the cytoplasmic membrane), and thus conserves the redox energy in a proton gradient. This subunit may bind ubiquinone. This Neisseria meningitidis serogroup B (strain ATCC BAA-335 / MC58) protein is NADH-quinone oxidoreductase subunit H.